The following is a 445-amino-acid chain: 6-phosphogluconate dehydrogenase, decarboxylating (445 aa).

NADP(+) is bound by residues 1 to 4 (AVMG), 22 to 24 (NRS), 63 to 65 (VKA), and N91. Substrate contacts are provided by residues N91 and 117 to 119 (SGG). The Proton acceptor role is filled by K172. 175–176 (HN) lines the substrate pocket. E179 (proton donor) is an active-site residue. Substrate contacts are provided by Y180, K249, R276, R434, and H440.

It belongs to the 6-phosphogluconate dehydrogenase family. In terms of assembly, homodimer.

The enzyme catalyses 6-phospho-D-gluconate + NADP(+) = D-ribulose 5-phosphate + CO2 + NADPH. It functions in the pathway carbohydrate degradation; pentose phosphate pathway; D-ribulose 5-phosphate from D-glucose 6-phosphate (oxidative stage): step 3/3. Functionally, catalyzes the oxidative decarboxylation of 6-phosphogluconate to ribulose 5-phosphate and CO(2), with concomitant reduction of NADP to NADPH. The sequence is that of 6-phosphogluconate dehydrogenase, decarboxylating (gnd) from Citrobacter amalonaticus.